The following is a 502-amino-acid chain: L-arabinose isomerase (502 aa).

Mn(2+)-binding residues include Glu306, Glu333, His350, and His449.

The protein belongs to the arabinose isomerase family. Mn(2+) is required as a cofactor.

It catalyses the reaction beta-L-arabinopyranose = L-ribulose. The protein operates within carbohydrate degradation; L-arabinose degradation via L-ribulose; D-xylulose 5-phosphate from L-arabinose (bacterial route): step 1/3. Catalyzes the conversion of L-arabinose to L-ribulose. In Flavobacterium johnsoniae (strain ATCC 17061 / DSM 2064 / JCM 8514 / BCRC 14874 / CCUG 350202 / NBRC 14942 / NCIMB 11054 / UW101) (Cytophaga johnsonae), this protein is L-arabinose isomerase.